We begin with the raw amino-acid sequence, 261 residues long: Lytic polysaccharide monooxygenase-like protein X325 (261 aa).

Residues 1-17 form the signal peptide; the sequence is MQLSALALATLLATANA. Cu(2+) is bound by residues His-18, His-64, and Asp-133. 2 disulfides stabilise this stretch: Cys-39–Cys-139 and Cys-108–Cys-155. Asn-157 and Asn-183 each carry an N-linked (GlcNAc...) asparagine glycan. The disordered stretch occupies residues 174–210; it reads LAENTQGSGNSSGHAHGSSGSGSASASKTDSKSSAAS. The segment covering 180–210 has biased composition (low complexity); the sequence is GSGNSSGHAHGSSGSGSASASKTDSKSSAAS. A lipid anchor (GPI-anchor amidated asparagine) is attached at Asn-238. A propeptide spans 239–261 (removed in mature form); sequence SGSLAYVNGALAIGGVVAAALLI.

This sequence belongs to the X325 family. Requires Cu(2+) as cofactor.

The protein resides in the cell membrane. Its function is as follows. Lytic polysaccharide monooxygenase-like protein that has diverged to biological functions other than polysaccharide degradation since it does not perform oxidative cleavage of polysaccharides. Acts as a cell surface-bound protein that functions in the copper-accumulation pathway. The chain is Lytic polysaccharide monooxygenase-like protein X325 from Yarrowia lipolytica (strain CLIB 122 / E 150) (Yeast).